Reading from the N-terminus, the 99-residue chain is Cell division protein FtsB (99 aa).

Residues Met-1–Val-3 are Cytoplasmic-facing. A helical membrane pass occupies residues Phe-4–Phe-21. Over Gly-22–Asn-99 the chain is Periplasmic. The stretch at Tyr-29–Leu-53 forms a coiled coil.

It belongs to the FtsB family. As to quaternary structure, part of a complex composed of FtsB, FtsL and FtsQ.

The protein localises to the cell inner membrane. In terms of biological role, essential cell division protein. May link together the upstream cell division proteins, which are predominantly cytoplasmic, with the downstream cell division proteins, which are predominantly periplasmic. This Colwellia psychrerythraea (strain 34H / ATCC BAA-681) (Vibrio psychroerythus) protein is Cell division protein FtsB.